Consider the following 362-residue polypeptide: Peptide chain release factor 1 (362 aa).

Gln235 is modified (N5-methylglutamine).

Belongs to the prokaryotic/mitochondrial release factor family. In terms of processing, methylated by PrmC. Methylation increases the termination efficiency of RF1.

The protein resides in the cytoplasm. Functionally, peptide chain release factor 1 directs the termination of translation in response to the peptide chain termination codons UAG and UAA. This is Peptide chain release factor 1 from Acinetobacter baumannii (strain AYE).